The primary structure comprises 324 residues: tRNA (cytidine(32)/guanosine(34)-2'-O)-methyltransferase (324 aa).

S-adenosyl-L-methionine contacts are provided by Gly53, Trp55, Asp75, Asp91, and Asp116. Lys156 acts as the Proton acceptor in catalysis. Residues 221–240 (DFNQLDGPTRVIVPFVACGD) are required for binding to WDR6.

The protein belongs to the class I-like SAM-binding methyltransferase superfamily. RNA methyltransferase RlmE family. TRM7 subfamily. Interacts with WDR6; the interaction is direct, and required for 2'-O-methylation of position 34 in substrate tRNAs.

It is found in the cytoplasm. The protein resides in the nucleus. The catalysed reaction is cytidine(32)/guanosine(34) in tRNA + 2 S-adenosyl-L-methionine = 2'-O-methylcytidine(32)/2'-O-methylguanosine(34) in tRNA + 2 S-adenosyl-L-homocysteine + 2 H(+). In terms of biological role, methylates the 2'-O-ribose of nucleotides at positions 32 and 34 of the tRNA anticodon loop of substrate tRNAs. Requisite for faithful cytoplasmic translation. Requires THADA for methylation of the cytidine at position 32 of the anticodon loop of substrate tRNAs. Requires WDR6 for methylation of the nucleotide at position 34 of the anticodon loop of substrate tRNAs. Promotes translation efficiency of the UUU codon. Plays a role in neurogenesis. Required for expression of genes involved in neurogenesis and mitochondrial translation and energy generation. Requisite for RNA-mediated gene silencing. May modify position 32 in tRNA(Arg(ACG)), tRNA(Gln(CUG)), tRNA(Leu(UAA)), tRNA(Leu(UAG)), tRNA(Leu(AAG)), tRNA(Leu(CAG)), tRNA(Phe(GAA)), tRNA(Trp(CCA)) and tRNA(Val(AAC)), and position 34 in tRNA(Phe(GAA)), tRNA(Leu(CAA)), tRNA(Leu(UAA)), tRNA(Sec(UCA)), and tRNA(Trp(CCA)). This is tRNA (cytidine(32)/guanosine(34)-2'-O)-methyltransferase from Mus musculus (Mouse).